We begin with the raw amino-acid sequence, 376 residues long: Histidinol dehydrogenase (376 aa).

NAD(+) contacts are provided by Tyr-100 and Asn-182. The substrate site is built by Ser-205, Gln-227, and His-230. Residues Gln-227 and His-230 each coordinate Zn(2+). Active-site proton acceptor residues include Glu-275 and His-276. The substrate site is built by His-276, Asp-309, Glu-363, and His-368. Asp-309 is a Zn(2+) binding site. Residue His-368 participates in Zn(2+) binding.

Belongs to the histidinol dehydrogenase family. It depends on Zn(2+) as a cofactor.

It catalyses the reaction L-histidinol + 2 NAD(+) + H2O = L-histidine + 2 NADH + 3 H(+). It functions in the pathway amino-acid biosynthesis; L-histidine biosynthesis; L-histidine from 5-phospho-alpha-D-ribose 1-diphosphate: step 9/9. In terms of biological role, catalyzes the sequential NAD-dependent oxidations of L-histidinol to L-histidinaldehyde and then to L-histidine. The chain is Histidinol dehydrogenase from Thermococcus kodakarensis (strain ATCC BAA-918 / JCM 12380 / KOD1) (Pyrococcus kodakaraensis (strain KOD1)).